The sequence spans 171 residues: Neuronal vesicle trafficking-associated protein 2 (171 aa).

A compositionally biased stretch (polar residues) spans 1–10; sequence MVKLNSNPSE. The segment at 1-21 is disordered; the sequence is MVKLNSNPSEKGTKPPSVEDG. The Cytoplasmic portion of the chain corresponds to 1-71; it reads MVKLNSNPSE…FRVPKIAEFT (71 aa). Residues 72 to 92 form a helical; Signal-anchor for type II membrane protein membrane-spanning segment; it reads VTILVSLALAFLACIVFLVVY. Residues 93 to 171 lie on the Lumenal side of the membrane; the sequence is KAFTYDHSCP…EPKPPKTQGH (79 aa).

This sequence belongs to the NSG family.

Its subcellular location is the membrane. It is found in the golgi apparatus. The protein localises to the trans-Golgi network membrane. The protein resides in the cell projection. It localises to the dendrite. Its subcellular location is the endosome membrane. It is found in the early endosome membrane. The protein localises to the late endosome membrane. The protein resides in the lysosome lumen. It localises to the cytoplasmic vesicle membrane. Its subcellular location is the golgi stack membrane. It is found in the endosome. The protein localises to the multivesicular body membrane. The polypeptide is Neuronal vesicle trafficking-associated protein 2 (Homo sapiens (Human)).